The following is a 637-amino-acid chain: ATP-dependent zinc metalloprotease FtsH (637 aa).

Residues 1 to 7 (MNRVFRN) lie on the Cytoplasmic side of the membrane. A helical transmembrane segment spans residues 8–28 (TIFYLLILLVVIGVVSYFQTS). Topologically, residues 29-109 (NPKTENMSYS…VEPAQETSGW (81 aa)) are extracellular. The helical transmembrane segment at 110-130 (VTFLTTIIPFVIIFILFFFLL) threads the bilayer. At 131–637 (NQAQGGGSRV…TEEKKDDTKE (507 aa)) the chain is on the cytoplasmic side. 201 to 208 (GPPGTGKT) is a binding site for ATP. Zn(2+) is bound at residue histidine 423. Residue glutamate 424 is part of the active site. Zn(2+)-binding residues include histidine 427 and aspartate 499. The segment at 514 to 637 (FGMSEKLGPL…TEEKKDDTKE (124 aa)) is not necessary for FtsH function.

In the central section; belongs to the AAA ATPase family. This sequence in the C-terminal section; belongs to the peptidase M41 family. In terms of assembly, homohexamer. Interacts with FloT at midcell. Interacts with FloA at midcell. Another study shows only minor colocalization with FloA or FloT. It depends on Zn(2+) as a cofactor.

It localises to the cell membrane. The protein localises to the membrane raft. Acts as a processive, ATP-dependent zinc metallopeptidase for both cytoplasmic and membrane proteins. Plays a role in the quality control of integral membrane proteins. In terms of biological role, in vitro partially degrades Spo0E, the phosphatase that acts on Spo0A-P. Recognition requires the last 14 residues of Spo0E. Its stabile accumulation requires FlotA and Flot. May degrade EzrA. The polypeptide is ATP-dependent zinc metalloprotease FtsH (Bacillus subtilis (strain 168)).